Here is a 1499-residue protein sequence, read N- to C-terminus: Condensin complex subunit 1 (1499 aa).

Disordered stretches follow at residues 1-43 (MPRK…DGLS) and 1421-1499 (ITKN…MLDD). The span at 1432–1446 (PTTMSGSSRTTSRAA) shows a compositional bias: low complexity. Acidic residues-rich tracts occupy residues 1458–1467 (SDEDDSDSDD) and 1486–1499 (ADDDSDSDEFMLDD).

This sequence belongs to the CND1 (condensin subunit 1) family. As to quaternary structure, component of the condensin I complex, which contains the mix-1/SMC2 and smc-4/SMC4 heterodimer, and three non SMC subunits that probably regulate the complex: dpy-26, capg-1 and dpy-28. Within the complex, interacts with dpy-26 and smc-4. Component of the dosage compensation complex, which consist of the condensin I like components mix-1/SMC2 and dpy-27/SMC4, and the three non SMC subunits dpy-26, capg-1 and dpy-28. Within the complex, interacts with mix-1, dpy-27, dpy-26 and capg-1. Interacts with smcl-1. Post-translationally, sumoylated. Sumoylated in the context of the dosage compensation complex but not in the condensin I complex. Sumoylation is important for assembly of the dosage compensation complex and its robust binding to the X chromosome. As to expression, expressed in somatic and germline tissues (at protein level).

It is found in the nucleus. The protein localises to the chromosome. Functionally, required for both chromosome condensation and segregation during mitosis and meiosis and X-chromosome dosage compensation depending on its binding partners. Regulatory subunit of the condensin I complex, a complex required for conversion of interphase chromatin into mitotic-like condense chromosomes. The condensin I complex probably introduces positive supercoils into relaxed DNA in the presence of type I topoisomerases and converts nicked DNA into positive knotted forms in the presence of type II topoisomerases. The condensin I complex function is required for proper chromosome segregation in mitosis and meiosis. As a member of the condensin I complex, further controls the crossover number and distribution in meiosis by restricting double strand break formation, possibly by influencing higher-order chromosome structure. Plays a role in robust cytokinesis upon presence of chromatin obstructions. Also a member of the condensin I-like dosage compensation complex that associates specifically with hermaphrodite X chromosomes to reduce their gene transcription during interphase, possibly through chromatin reorganization. The protein is Condensin complex subunit 1 of Caenorhabditis elegans.